Here is a 122-residue protein sequence, read N- to C-terminus: UPF0382 membrane protein SAUSA300_0565 (122 aa).

4 helical membrane passes run 3–23 (LFII…AFGA), 46–66 (MYHG…SINV), 69–89 (AGWL…ILVL), and 98–118 (ITPI…IATF).

It belongs to the UPF0382 family.

Its subcellular location is the cell membrane. In Staphylococcus aureus (strain USA300), this protein is UPF0382 membrane protein SAUSA300_0565.